A 177-amino-acid polypeptide reads, in one-letter code: Secretion monitor (177 aa).

The first 37 residues, 1–37 (MIGILNRWRQFGRRYFWPHLLLGMVAASLGVPSNLSG), serve as a signal peptide directing secretion.

Belongs to the SecM family.

Its subcellular location is the cytoplasm. The protein localises to the cytosol. It is found in the periplasm. In terms of biological role, regulates secA expression by translational coupling of the secM secA operon. Translational pausing at a specific Pro residue 5 residues before the end of the protein may allow disruption of a mRNA repressor helix that normally suppresses secA translation initiation. This chain is Secretion monitor, found in Yersinia pseudotuberculosis serotype O:1b (strain IP 31758).